A 341-amino-acid polypeptide reads, in one-letter code: D-aspartate oxidase (341 aa).

Positions 36, 37, 43, 44, 50, 307, and 311 each coordinate FAD. The Microbody targeting signal motif lies at 339 to 341 (SKL).

Belongs to the DAMOX/DASOX family. As to quaternary structure, homotetramer. Interacts with PEX5; the interaction is direct and required for localization of DDO to the peroxisome. FAD serves as cofactor. Expressed in epithelial cells of the renal proximal tubules (not detected in the glomeruli or renal distal tubules), liver, right atrium of heart, lung, chief cells of the gastric mucosa, choroid plexus, pia mater, brain stem, midbrain, pons, medulla oblongata, hypothalamus, hippocampus, cerebral cortex, cerebellum, ependyma, olfactory bulb and the pituitary, pineal, thyroid and adrenal glands (at protein level).

The protein resides in the peroxisome matrix. The protein localises to the cytoplasm. Its subcellular location is the cytosol. The enzyme catalyses D-aspartate + O2 + H2O = oxaloacetate + H2O2 + NH4(+). It catalyses the reaction D-glutamate + O2 + H2O = H2O2 + 2-oxoglutarate + NH4(+). In terms of biological role, selectively catalyzes the oxidative deamination of acidic amino acids. Suppresses the level of D-aspartate in the brain, an amino acid that can act as an agonist for glutamate receptors. Protects the organism from the toxicity of D-amino acids. May also function in the intestine. The polypeptide is D-aspartate oxidase (DDO) (Sus scrofa (Pig)).